Reading from the N-terminus, the 737-residue chain is Procollagen-lysine,2-oxoglutarate 5-dioxygenase 2 (737 aa).

Positions 1–25 are cleaved as a signal peptide; sequence MGGCTVKPQLLLLALVLHPWNPCLG. N-linked (GlcNAc...) asparagine glycosylation is found at N63, N209, and N297. Phosphothreonine is present on T320. Residue Y323 is modified to Phosphotyrosine. Residues N365 and N522 are each glycosylated (N-linked (GlcNAc...) asparagine). A Fe2OG dioxygenase domain is found at 644–737; sequence KGFALLNFVV…RYIAVSFIDP (94 aa). Fe cation is bound by residues H666 and D668. An N-linked (GlcNAc...) asparagine glycan is attached at N696. K704 is subject to N6-succinyllysine. Residue H718 participates in Fe cation binding. The N-linked (GlcNAc...) asparagine glycan is linked to N725. Residue R728 is part of the active site.

As to quaternary structure, homodimer. Requires Fe(2+) as cofactor. It depends on L-ascorbate as a cofactor. In terms of tissue distribution, highly expressed in pancreas and muscle. Isoform 1 and isoform 2 are expressed in the majority of the examined cell types. Isoform 2 is specifically expressed in skin, lung, dura and aorta.

The protein resides in the rough endoplasmic reticulum membrane. It catalyses the reaction L-lysyl-[collagen] + 2-oxoglutarate + O2 = (5R)-5-hydroxy-L-lysyl-[collagen] + succinate + CO2. In terms of biological role, forms hydroxylysine residues in -Xaa-Lys-Gly- sequences in collagens. These hydroxylysines serve as sites of attachment for carbohydrate units and are essential for the stability of the intermolecular collagen cross-links. In Homo sapiens (Human), this protein is Procollagen-lysine,2-oxoglutarate 5-dioxygenase 2.